The sequence spans 273 residues: Phosphonates import ATP-binding protein PhnC (273 aa).

The ABC transporter domain maps to 2–245 (LRIDKLTKRF…VAREIYGADA (244 aa)). 34–41 (GRSGAGKS) is a binding site for ATP.

Belongs to the ABC transporter superfamily. Phosphonates importer (TC 3.A.1.9.1) family. The complex is composed of two ATP-binding proteins (PhnC), two transmembrane proteins (PhnE) and a solute-binding protein (PhnD).

Its subcellular location is the cell inner membrane. The catalysed reaction is phosphonate(out) + ATP + H2O = phosphonate(in) + ADP + phosphate + H(+). Its function is as follows. Part of the ABC transporter complex PhnCDE involved in phosphonates import. Responsible for energy coupling to the transport system. The sequence is that of Phosphonates import ATP-binding protein PhnC from Ruegeria pomeroyi (strain ATCC 700808 / DSM 15171 / DSS-3) (Silicibacter pomeroyi).